Here is a 212-residue protein sequence, read N- to C-terminus: Pyridoxine/pyridoxamine 5'-phosphate oxidase (212 aa).

Substrate is bound by residues 8 to 11 (RREY) and lysine 66. FMN is bound by residues 61 to 66 (RIVLLK), 76 to 77 (FT), arginine 82, lysine 83, and glutamine 105. Substrate-binding residues include tyrosine 123, arginine 127, and serine 131. Residues 140 to 141 (QS) and tryptophan 185 each bind FMN. A substrate-binding site is contributed by 191-193 (RLH). Arginine 195 contributes to the FMN binding site.

Belongs to the pyridoxamine 5'-phosphate oxidase family. In terms of assembly, homodimer. FMN serves as cofactor.

The enzyme catalyses pyridoxamine 5'-phosphate + O2 + H2O = pyridoxal 5'-phosphate + H2O2 + NH4(+). It catalyses the reaction pyridoxine 5'-phosphate + O2 = pyridoxal 5'-phosphate + H2O2. Its pathway is cofactor metabolism; pyridoxal 5'-phosphate salvage; pyridoxal 5'-phosphate from pyridoxamine 5'-phosphate: step 1/1. It participates in cofactor metabolism; pyridoxal 5'-phosphate salvage; pyridoxal 5'-phosphate from pyridoxine 5'-phosphate: step 1/1. Functionally, catalyzes the oxidation of either pyridoxine 5'-phosphate (PNP) or pyridoxamine 5'-phosphate (PMP) into pyridoxal 5'-phosphate (PLP). This is Pyridoxine/pyridoxamine 5'-phosphate oxidase from Shewanella sp. (strain MR-7).